Consider the following 228-residue polypeptide: MEKRSGIGRLYQGSFFNRYSRAGGNPGAPSVRCARVRGDDGVLVFTPFGNDRRGTSSTTMKQWVKMMNDIVIDKRGFRLGVGMVIMNRQGELLWGRRVGNPDAWQFPQGGLLPNETLREALNRELDEEVGLSPHDVIYLRETRQWISYRLPKKFRRPEHRGPVCIGQRQKWFLLQFTGKDDAISLDHCSQPEFDQWRWVDYWYPVDHVVEFKRDVYQKVLTEFAEFIR.

A unknown region spans residues 1–70; it reads MEKRSGIGRL…KQWVKMMNDI (70 aa). Residues 71-228 form a rppH domain region; the sequence is VIDKRGFRLG…VLTEFAEFIR (158 aa). Residues 76 to 221 form the Nudix hydrolase domain; it reads GFRLGVGMVI…KRDVYQKVLT (146 aa). Positions 109 to 130 match the Nudix box motif; that stretch reads GGLLPNETLREALNRELDEEVG.

The protein in the C-terminal section; belongs to the Nudix hydrolase family. RppH subfamily. It depends on a divalent metal cation as a cofactor.

Its function is as follows. Accelerates the degradation of transcripts by removing pyrophosphate from the 5'-end of triphosphorylated RNA, leading to a more labile monophosphorylated state that can stimulate subsequent ribonuclease cleavage. The protein is RNA pyrophosphohydrolase of Coxiella burnetii (strain RSA 493 / Nine Mile phase I).